The sequence spans 309 residues: Ribose-phosphate pyrophosphokinase (309 aa).

Residues 42–44 (DEE) and 102–103 (RQ) each bind ATP. Residues histidine 136 and aspartate 175 each coordinate Mg(2+). The active site involves lysine 199. D-ribose 5-phosphate is bound by residues arginine 201, aspartate 226, and 230 to 234 (STGGT).

Belongs to the ribose-phosphate pyrophosphokinase family. Class III (archaeal) subfamily. Requires Mg(2+) as cofactor.

The protein resides in the cytoplasm. It catalyses the reaction D-ribose 5-phosphate + ATP = 5-phospho-alpha-D-ribose 1-diphosphate + AMP + H(+). It functions in the pathway metabolic intermediate biosynthesis; 5-phospho-alpha-D-ribose 1-diphosphate biosynthesis; 5-phospho-alpha-D-ribose 1-diphosphate from D-ribose 5-phosphate (route I): step 1/1. Involved in the biosynthesis of the central metabolite phospho-alpha-D-ribosyl-1-pyrophosphate (PRPP) via the transfer of pyrophosphoryl group from ATP to 1-hydroxyl of ribose-5-phosphate (Rib-5-P). This chain is Ribose-phosphate pyrophosphokinase, found in Aeropyrum pernix (strain ATCC 700893 / DSM 11879 / JCM 9820 / NBRC 100138 / K1).